The chain runs to 377 residues: Probable G-protein coupled receptor 27 (377 aa).

Over 1–24 (MANASEPGGGGGGAEAAALGLRLA) the chain is Extracellular. N-linked (GlcNAc...) asparagine glycosylation is present at Asn3. A helical membrane pass occupies residues 25-45 (TLSLLLCVSLAGNVLFALLIV). Topologically, residues 46-56 (RERSLHRAPYY) are cytoplasmic. Residues 57–77 (LLLDLCLADGLRALACLPAVM) form a helical membrane-spanning segment. Over 78 to 98 (LAARRAAAAAGTPPGALGCKL) the chain is Extracellular. Cysteines 96 and 173 form a disulfide. The helical transmembrane segment at 99-119 (LAFLAALFCFHAAFLLLGVGV) threads the bilayer. The Cytoplasmic portion of the chain corresponds to 120–140 (TRYLAIAHHRFYAERLAGWPC). A helical transmembrane segment spans residues 141–161 (AAMLVCAAWALALAAAFPPVL). The Extracellular segment spans residues 162 to 183 (DGGGADDEDAPCALEQRPDGAP). Residues 184 to 204 (GALGFLLLLAAVVGATHLVYL) traverse the membrane as a helical segment. The Cytoplasmic portion of the chain corresponds to 205–287 (RLLFFIHDRR…FKTEKRLCKM (83 aa)). Residues 288 to 308 (FYAITLLFLLLWGPYVVASYL) traverse the membrane as a helical segment. Residues 309-322 (RVLVRPGAVPQAYL) lie on the Extracellular side of the membrane. A helical membrane pass occupies residues 323–343 (TASVWLTFAQAGINPVVCFLF). Residues 344–377 (NRELRDCFRAQFPCCQSPQATQATLPCDLKGIGL) lie on the Cytoplasmic side of the membrane.

The protein belongs to the G-protein coupled receptor 1 family. As to expression, expressed as a 3.0 kb transcript, in whole brain, hippocampus, striatum, frontal cortex, thalamus, pons and hypothalamus. A lower molecular weight transcript was detected in all regions examined, except the hypothalamus.

The protein resides in the cell membrane. Orphan receptor. Possible candidate for amine-like G-protein coupled receptor. The protein is Probable G-protein coupled receptor 27 (Gpr27) of Rattus norvegicus (Rat).